Here is an 80-residue protein sequence, read N- to C-terminus: Exodeoxyribonuclease 7 small subunit (80 aa).

This sequence belongs to the XseB family. As to quaternary structure, heterooligomer composed of large and small subunits.

The protein resides in the cytoplasm. It catalyses the reaction Exonucleolytic cleavage in either 5'- to 3'- or 3'- to 5'-direction to yield nucleoside 5'-phosphates.. Functionally, bidirectionally degrades single-stranded DNA into large acid-insoluble oligonucleotides, which are then degraded further into small acid-soluble oligonucleotides. The sequence is that of Exodeoxyribonuclease 7 small subunit from Pseudomonas fluorescens (strain ATCC BAA-477 / NRRL B-23932 / Pf-5).